The sequence spans 348 residues: Histidinol-phosphate aminotransferase (348 aa).

Lys-210 bears the N6-(pyridoxal phosphate)lysine mark.

It belongs to the class-II pyridoxal-phosphate-dependent aminotransferase family. Histidinol-phosphate aminotransferase subfamily. In terms of assembly, homodimer. It depends on pyridoxal 5'-phosphate as a cofactor.

It catalyses the reaction L-histidinol phosphate + 2-oxoglutarate = 3-(imidazol-4-yl)-2-oxopropyl phosphate + L-glutamate. It participates in amino-acid biosynthesis; L-histidine biosynthesis; L-histidine from 5-phospho-alpha-D-ribose 1-diphosphate: step 7/9. The polypeptide is Histidinol-phosphate aminotransferase (Pseudomonas putida (strain ATCC 700007 / DSM 6899 / JCM 31910 / BCRC 17059 / LMG 24140 / F1)).